The following is a 420-amino-acid chain: NEDD8-specific protease 1 (420 aa).

Residues 257-281 (KSSDSSETSHESSNSNLKKSSESGS) show a composition bias toward low complexity. The interval 257 to 420 (KSSDSSETSH…EELVSGDFPF (164 aa)) is disordered. The span at 286 to 296 (NNHESDKDLHH) shows a compositional bias: basic and acidic residues. A compositionally biased stretch (basic residues) spans 297-310 (EGHHHHHHHHHHHH). Residues 311–324 (SHDDDPSSPAEKKQ) are compositionally biased toward basic and acidic residues. 3 positions are modified to phosphoserine: Ser-329, Ser-340, and Ser-351. Basic and acidic residues predominate over residues 355–377 (NKEDHLPLLSDEKLDKSAIDKIE).

Belongs to the peptidase C48 family. In terms of assembly, interacts with csn1. It is, however, not a component of the signalosome.

The protein resides in the cytoplasm. Functionally, protease that catalyzes two essential functions in the NEDD8 pathway: processing of full-length NEDD8 to its mature form and deconjugation of NEDD8 from targeted proteins such as the pcu1, pcu2 and pcu4 cullins and other proteins. The protein is NEDD8-specific protease 1 (nep1) of Schizosaccharomyces pombe (strain 972 / ATCC 24843) (Fission yeast).